The chain runs to 430 residues: Histidinol dehydrogenase (430 aa).

The NAD(+) site is built by Y130, Q191, and N214. Residues S237, Q259, and H262 each coordinate substrate. Zn(2+) contacts are provided by Q259 and H262. Residues E327 and H328 each act as proton acceptor in the active site. H328, D361, E415, and H420 together coordinate substrate. D361 provides a ligand contact to Zn(2+). H420 provides a ligand contact to Zn(2+).

This sequence belongs to the histidinol dehydrogenase family. Zn(2+) is required as a cofactor.

It catalyses the reaction L-histidinol + 2 NAD(+) + H2O = L-histidine + 2 NADH + 3 H(+). The protein operates within amino-acid biosynthesis; L-histidine biosynthesis; L-histidine from 5-phospho-alpha-D-ribose 1-diphosphate: step 9/9. Catalyzes the sequential NAD-dependent oxidations of L-histidinol to L-histidinaldehyde and then to L-histidine. The protein is Histidinol dehydrogenase of Brucella suis biovar 1 (strain 1330).